Reading from the N-terminus, the 203-residue chain is Large ribosomal subunit protein bL25 (203 aa).

This sequence belongs to the bacterial ribosomal protein bL25 family. CTC subfamily. As to quaternary structure, part of the 50S ribosomal subunit; part of the 5S rRNA/L5/L18/L25 subcomplex. Contacts the 5S rRNA. Binds to the 5S rRNA independently of L5 and L18.

In terms of biological role, this is one of the proteins that binds to the 5S RNA in the ribosome where it forms part of the central protuberance. The polypeptide is Large ribosomal subunit protein bL25 (Cellvibrio japonicus (strain Ueda107) (Pseudomonas fluorescens subsp. cellulosa)).